A 314-amino-acid chain; its full sequence is Formate-nitrite transporter (314 aa).

Over 1–47 the chain is Cytoplasmic; that stretch reads MSKGKSKYVIDPISVKTACTSEESYIRCVEYGKGKAHYPNLSLLAKA. The chain crosses the membrane as a helical span at residues 48–68; that stretch reads ILAGVFVGVCAHASGIAGGHF. The Extracellular portion of the chain corresponds to 69 to 78; the sequence is YYHKLREYVG. A helical membrane pass occupies residues 79–99; sequence ISMSAFVYGFTFPIAFLCIIA. Over 100 to 128 the chain is Cytoplasmic; it reads TGSDLFTGNTLAVTTALLQRKVSLLQYLR. The helical transmembrane segment at 129–149 threads the bilayer; it reads VMSISLFGNYLGAVSFAFFVS. The Extracellular portion of the chain corresponds to 150-185; the sequence is HLSGAYEKHTDVTKNHIFQFLNDIAEKKISHTFIQC. The helical transmembrane segment at 186 to 206 threads the bilayer; that stretch reads ICLAIGCNIFVCLAVYFVLTI. Over 207–211 the chain is Cytoplasmic; it reads KDGSG. A helical transmembrane segment spans residues 212–232; that stretch reads MVFSVFFAVYAFAIAGYEHII. Residues 233–257 lie on the Extracellular side of the membrane; that stretch reads ANMYTLNLALMVEAKVTWSKVYFHN. Residues 258-278 traverse the membrane as a helical segment; sequence LLPTLIGNYIAGALVLACPLF. Residues 279–314 lie on the Cytoplasmic side of the membrane; sequence YIYRNSYRDYERTRGDGSNCGLRSLSIEMQNGSNGN.

It belongs to the FNT transporter (TC 1.A.16) family. Homopentamer.

It is found in the cell membrane. The protein localises to the vacuole membrane. The catalysed reaction is (S)-lactate(in) + H(+)(in) = (S)-lactate(out) + H(+)(out). It catalyses the reaction formate(in) + H(+)(in) = formate(out) + H(+)(out). It carries out the reaction pyruvate(out) + H(+)(out) = pyruvate(in) + H(+)(in). The enzyme catalyses acetate(out) + H(+)(out) = acetate(in) + H(+)(in). Inhibited by the Malaria Box compound MMV007839 and its derivatives BH296 and BH267.meta. Monocarboxylate-proton symporter that mediates the efflux of the waste product lactate in the intraerythrocytic parasites; active in acidic-to-neutral pH range. Transports L-lactate. This is Formate-nitrite transporter from Plasmodium knowlesi (strain H).